A 465-amino-acid chain; its full sequence is Adenosylhomocysteinase (465 aa).

Residues T56, D131, and E191 each contribute to the substrate site. 192–194 (TTT) serves as a coordination point for NAD(+). Substrate-binding residues include K221 and D225. NAD(+) contacts are provided by residues N226, 255 to 260 (GYGDVG), E278, N313, 334 to 336 (IGH), and N379.

Belongs to the adenosylhomocysteinase family. It depends on NAD(+) as a cofactor.

It is found in the cytoplasm. It catalyses the reaction S-adenosyl-L-homocysteine + H2O = L-homocysteine + adenosine. The protein operates within amino-acid biosynthesis; L-homocysteine biosynthesis; L-homocysteine from S-adenosyl-L-homocysteine: step 1/1. In terms of biological role, may play a key role in the regulation of the intracellular concentration of adenosylhomocysteine. The sequence is that of Adenosylhomocysteinase from Bartonella henselae (strain ATCC 49882 / DSM 28221 / CCUG 30454 / Houston 1) (Rochalimaea henselae).